We begin with the raw amino-acid sequence, 265 residues long: Hydroxyethylthiazole kinase 2 (265 aa).

Substrate is bound at residue methionine 39. The ATP site is built by lysine 115 and threonine 168. Position 195 (glycine 195) interacts with substrate.

Belongs to the Thz kinase family. Mg(2+) is required as a cofactor.

The enzyme catalyses 5-(2-hydroxyethyl)-4-methylthiazole + ATP = 4-methyl-5-(2-phosphooxyethyl)-thiazole + ADP + H(+). The protein operates within cofactor biosynthesis; thiamine diphosphate biosynthesis; 4-methyl-5-(2-phosphoethyl)-thiazole from 5-(2-hydroxyethyl)-4-methylthiazole: step 1/1. In terms of biological role, catalyzes the phosphorylation of the hydroxyl group of 4-methyl-5-beta-hydroxyethylthiazole (THZ). This is Hydroxyethylthiazole kinase 2 from Clostridium botulinum (strain ATCC 19397 / Type A).